We begin with the raw amino-acid sequence, 927 residues long: BTB/POZ domain-containing protein KCTD19 (927 aa).

The BTB 1 domain maps to asparagine 18–threonine 72. A Phosphoserine modification is found at serine 270. A BTB 2 domain is found at isoleucine 399–leucine 486. The interval valine 664 to alanine 760 is disordered. Residues aspartate 731–proline 743 are compositionally biased toward basic and acidic residues.

As to quaternary structure, identified in a complex with ZNF541, HDAC1 and HSPA2. Identified in a complex with ZNF541 and HDAC1. Identified in a complex with HDAC1, HDAC2, DNTTIP1 and ZNF541. In terms of tissue distribution, detected in adult testis.

Its subcellular location is the nucleus. Its function is as follows. Transcription regulator which is essential for male fertility and for the completion of meiotic prophase in spermatocytes. Regulates progression of the pachytene stage of meiotic prophase and promotes the transcriptional activation activity ZNF541. Required for the organization of chromosomes during metaphase I. The chain is BTB/POZ domain-containing protein KCTD19 (Kctd19) from Mus musculus (Mouse).